Here is a 672-residue protein sequence, read N- to C-terminus: tRNA 5-methylaminomethyl-2-thiouridine biosynthesis bifunctional protein MnmC (672 aa).

Positions 1–241 (MLKVTTAHIH…KRECLQGFKP (241 aa)) are tRNA (mnm(5)s(2)U34)-methyltransferase. The tract at residues 271 to 672 (IGGGISSLFS…RKLLKGTPVK (402 aa)) is FAD-dependent cmnm(5)s(2)U34 oxidoreductase.

This sequence in the N-terminal section; belongs to the methyltransferase superfamily. tRNA (mnm(5)s(2)U34)-methyltransferase family. In the C-terminal section; belongs to the DAO family. FAD serves as cofactor.

The protein localises to the cytoplasm. The enzyme catalyses 5-aminomethyl-2-thiouridine(34) in tRNA + S-adenosyl-L-methionine = 5-methylaminomethyl-2-thiouridine(34) in tRNA + S-adenosyl-L-homocysteine + H(+). Catalyzes the last two steps in the biosynthesis of 5-methylaminomethyl-2-thiouridine (mnm(5)s(2)U) at the wobble position (U34) in tRNA. Catalyzes the FAD-dependent demodification of cmnm(5)s(2)U34 to nm(5)s(2)U34, followed by the transfer of a methyl group from S-adenosyl-L-methionine to nm(5)s(2)U34, to form mnm(5)s(2)U34. The sequence is that of tRNA 5-methylaminomethyl-2-thiouridine biosynthesis bifunctional protein MnmC from Mannheimia succiniciproducens (strain KCTC 0769BP / MBEL55E).